Consider the following 884-residue polypeptide: Alanine--tRNA ligase (884 aa).

Residues His572, His576, Cys673, and His677 each coordinate Zn(2+).

It belongs to the class-II aminoacyl-tRNA synthetase family. The cofactor is Zn(2+).

The protein localises to the cytoplasm. It catalyses the reaction tRNA(Ala) + L-alanine + ATP = L-alanyl-tRNA(Ala) + AMP + diphosphate. Functionally, catalyzes the attachment of alanine to tRNA(Ala) in a two-step reaction: alanine is first activated by ATP to form Ala-AMP and then transferred to the acceptor end of tRNA(Ala). Also edits incorrectly charged Ser-tRNA(Ala) and Gly-tRNA(Ala) via its editing domain. The protein is Alanine--tRNA ligase of Xylella fastidiosa (strain 9a5c).